The chain runs to 375 residues: Succinyl-diaminopimelate desuccinylase (375 aa).

His66 provides a ligand contact to Zn(2+). The active site involves Asp68. Residue Asp99 participates in Zn(2+) binding. Glu133 acts as the Proton acceptor in catalysis. Zn(2+)-binding residues include Glu134, Glu162, and His348.

Belongs to the peptidase M20A family. DapE subfamily. In terms of assembly, homodimer. It depends on Zn(2+) as a cofactor. Co(2+) serves as cofactor.

It carries out the reaction N-succinyl-(2S,6S)-2,6-diaminopimelate + H2O = (2S,6S)-2,6-diaminopimelate + succinate. It functions in the pathway amino-acid biosynthesis; L-lysine biosynthesis via DAP pathway; LL-2,6-diaminopimelate from (S)-tetrahydrodipicolinate (succinylase route): step 3/3. In terms of biological role, catalyzes the hydrolysis of N-succinyl-L,L-diaminopimelic acid (SDAP), forming succinate and LL-2,6-diaminopimelate (DAP), an intermediate involved in the bacterial biosynthesis of lysine and meso-diaminopimelic acid, an essential component of bacterial cell walls. The protein is Succinyl-diaminopimelate desuccinylase of Alkalilimnicola ehrlichii (strain ATCC BAA-1101 / DSM 17681 / MLHE-1).